Reading from the N-terminus, the 230-residue chain is UPF0494 membrane protein PB2B2.14c (230 aa).

Transmembrane regions (helical) follow at residues 78–98 (WPLL…NFEV), 120–140 (IWGP…GLIY), and 148–168 (AIPL…VAMV).

It belongs to the UPF0494 family.

It localises to the membrane. In Schizosaccharomyces pombe (strain 972 / ATCC 24843) (Fission yeast), this protein is UPF0494 membrane protein PB2B2.14c.